The following is a 189-amino-acid chain: UPF0301 protein PSPA7_0505 (189 aa).

Belongs to the UPF0301 (AlgH) family.

The sequence is that of UPF0301 protein PSPA7_0505 from Pseudomonas paraeruginosa (strain DSM 24068 / PA7) (Pseudomonas aeruginosa (strain PA7)).